The sequence spans 283 residues: Probable endonuclease 4 (283 aa).

Residues His-69, His-109, Glu-145, Asp-179, His-182, His-216, Asp-229, His-231, and Glu-261 each coordinate Zn(2+).

Belongs to the AP endonuclease 2 family. Zn(2+) is required as a cofactor.

It carries out the reaction Endonucleolytic cleavage to 5'-phosphooligonucleotide end-products.. In terms of biological role, endonuclease IV plays a role in DNA repair. It cleaves phosphodiester bonds at apurinic or apyrimidinic (AP) sites, generating a 3'-hydroxyl group and a 5'-terminal sugar phosphate. The polypeptide is Probable endonuclease 4 (Desulfosudis oleivorans (strain DSM 6200 / JCM 39069 / Hxd3) (Desulfococcus oleovorans)).